We begin with the raw amino-acid sequence, 527 residues long: Protein PyrBI (527 aa).

Positions 1–342 (MKRDFLGRTL…MFGGALEAPF (342 aa)) are aspartate carbamoyltransferase. The tract at residues 343-357 (DTSKKEEKPEEDFII) is linker. An aspartate carbamoyltransferase regulatory region region spans residues 368 to 527 (VQKEGKRGIK…PHSFEEIWSI (160 aa)). Zn(2+) contacts are provided by Cys-483, Cys-488, Cys-512, and Cys-515.

In the N-terminal section; belongs to the aspartate/ornithine carbamoyltransferase superfamily. ATCase family. It in the C-terminal section; belongs to the PyrI family.

It catalyses the reaction carbamoyl phosphate + L-aspartate = N-carbamoyl-L-aspartate + phosphate + H(+). Its pathway is pyrimidine metabolism; UMP biosynthesis via de novo pathway; (S)-dihydroorotate from bicarbonate: step 2/3. The protein is Protein PyrBI (pyrBI) of Thermotoga maritima (strain ATCC 43589 / DSM 3109 / JCM 10099 / NBRC 100826 / MSB8).